Reading from the N-terminus, the 76-residue chain is Conotoxin Am6.3 (76 aa).

The first 22 residues, Met-1–Ala-22, serve as a signal peptide directing secretion. 3 disulfides stabilise this stretch: Cys-52/Cys-67, Cys-59/Cys-71, and Cys-66/Cys-75.

The protein belongs to the conotoxin O1 superfamily. Is not hydroxylated. Expressed by the venom duct.

It localises to the secreted. Probable toxin that inhibits ion channels. This Conus amadis (Amadis cone) protein is Conotoxin Am6.3.